The sequence spans 343 residues: MMMEHKANMAMVFVQIVYAGMPLLSKVAISQGTNPFVFVFYRQAFAALALSPFAFFLESSKSSPLSFILLLKIFFISLCGLTLSLNLYYVAIENTTATFAAATTNAIPSITFVLALLFRLETVTLKKSHGVAKVTGSMVGMLGALVFAFVKGPSLINHYNSSTIPNGTVPSTKNSVKGSITMLAANTCWCLWIIMQSKVMKEYPAKLRLVALQCLFSCIQSAVWAVAVNRNPSVWKIEFGLPLLSMAYCGIMVTGLTYWLQVWAIEKKGPVFTALYTPLALILTCIVSSFLFKETFYLGSVGGAVLLVCGLYLGLWGKTKEEEIQRYGEKQSQKEIIEEVIIV.

10 helical membrane-spanning segments follow: residues 9-29 (MAMV…KVAI), 36-56 (FVFV…FAFF), 65-85 (LSFI…TLSL), 98-118 (TFAA…ALLF), 130-150 (GVAK…FAFV), 175-195 (SVKG…WIIM), 209-229 (LVAL…VAVN), 239-259 (FGLP…LTYW), 272-292 (FTAL…SFLF), and 296-316 (FYLG…LGLW). 2 consecutive EamA domains span residues 16-139 (IVYA…GSMV) and 188-313 (CWCL…GLYL).

It belongs to the drug/metabolite transporter (DMT) superfamily. Plant drug/metabolite exporter (P-DME) (TC 2.A.7.4) family.

Its subcellular location is the membrane. The protein is WAT1-related protein At1g43650 of Arabidopsis thaliana (Mouse-ear cress).